Consider the following 255-residue polypeptide: 5-oxoprolinase subunit A 1 (255 aa).

Belongs to the LamB/PxpA family. In terms of assembly, forms a complex composed of PxpA, PxpB and PxpC.

It carries out the reaction 5-oxo-L-proline + ATP + 2 H2O = L-glutamate + ADP + phosphate + H(+). Functionally, catalyzes the cleavage of 5-oxoproline to form L-glutamate coupled to the hydrolysis of ATP to ADP and inorganic phosphate. This is 5-oxoprolinase subunit A 1 from Agrobacterium fabrum (strain C58 / ATCC 33970) (Agrobacterium tumefaciens (strain C58)).